The sequence spans 644 residues: Exoribonuclease 2 (644 aa).

The 328-residue stretch at Arg-189–Lys-516 folds into the RNB domain. The S1 motif domain maps to Asp-561 to Val-643.

This sequence belongs to the RNR ribonuclease family. RNase II subfamily.

The protein localises to the cytoplasm. It carries out the reaction Exonucleolytic cleavage in the 3'- to 5'-direction to yield nucleoside 5'-phosphates.. Functionally, involved in mRNA degradation. Hydrolyzes single-stranded polyribonucleotides processively in the 3' to 5' direction. The protein is Exoribonuclease 2 of Escherichia coli O157:H7.